A 383-amino-acid chain; its full sequence is Aurachin C monooxygenase/isomerase (383 aa).

FAD is bound by residues G15, S47, V128, D285, and 295–299 (GQGGC).

FAD is required as a cofactor.

It catalyses the reaction aurachin C + NADH + O2 + H(+) = 4-hydroxy-2-methyl-3-oxo-4-[(2E,6E)-farnesyl]-3,4-dihydroquinoline 1-oxide + NAD(+) + H2O. It carries out the reaction aurachin C + NADPH + O2 + H(+) = 4-hydroxy-2-methyl-3-oxo-4-[(2E,6E)-farnesyl]-3,4-dihydroquinoline 1-oxide + NADP(+) + H2O. The enzyme catalyses aurachin C + NADH + O2 + H(+) = aurachin C epoxide + NAD(+) + H2O. The catalysed reaction is aurachin C + NADPH + O2 + H(+) = aurachin C epoxide + NADP(+) + H2O. It catalyses the reaction aurachin C epoxide = 2-hydroxy-1a-methyl-7a-[(2E,6E)-farnesyl]-1a,2-dihydrooxireno[2,3-b]quinolin-7(7aH)-one. It carries out the reaction 2-hydroxy-1a-methyl-7a-[(2E,6E)-farnesyl]-1a,2-dihydrooxireno[2,3-b]quinolin-7(7aH)-one = 4-hydroxy-2-methyl-3-oxo-4-[(2E,6E)-farnesyl]-3,4-dihydroquinoline 1-oxide. Catalyzes the initial step in the conversion of aurachin C to aurachin B. Catalyzes the epoxidation of the C(2)-C(3) double bond of aurachin C, which is followed by a semipinacol rearrangement, causing migration of the farnesyl group from C(3) to C(4). Accepts both NADH and NADPH, but has a preference for NADH. The chain is Aurachin C monooxygenase/isomerase from Stigmatella aurantiaca.